The following is a 279-amino-acid chain: MYVTPALLFLSAYLILPTLETVYLSFFDGRSRNFVGLKNYVFAFTDHTMLVAFRNNLLWLVLVTGISVSLGLIIAVLVDKVRYEAIAKSIIFLPMAISFVGASVIWKFVYAYRPAGAEQIGLLNAIVTSLGFAPVGWLVERSVNNFALIAIMIWLYTGFCMVILSAAVKGIPADVIEAARIDGANSWQIFWRITIPMIRSTLLVVSTTMVILVLKVFDIVFVMTGGNQGTEVIASLMIKEMFNYRNFGRGSTIAVILLLLIVPVMITNIRRFKAQEKLR.

The next 7 membrane-spanning stretches (helical) occupy residues Leu-7–Phe-27, Leu-58–Val-78, Ile-90–Tyr-110, Ile-120–Glu-140, Phe-146–Ala-166, Leu-202–Val-222, and Phe-247–Thr-267. One can recognise an ABC transmembrane type-1 domain in the interval Phe-53–Arg-270.

The protein belongs to the binding-protein-dependent transport system permease family. As to quaternary structure, the complex is composed of two ATP-binding proteins (GgtA), two transmembrane proteins (GgtC and GgtD) and a solute-binding protein (GgtB).

The protein localises to the cell membrane. In terms of biological role, part of the ABC transporter complex GgtABCD involved in the uptake of the osmoprotective compounds glucosylglycerol (GG), sucrose and trehalose. Responsible for the translocation of the substrate across the membrane. This chain is Osmoprotective compounds uptake permease protein GgtC, found in Synechocystis sp. (strain ATCC 27184 / PCC 6803 / Kazusa).